The sequence spans 190 residues: Peptidyl-tRNA hydrolase (190 aa).

TRNA is bound at residue Tyr17. His22 functions as the Proton acceptor in the catalytic mechanism. Residues Tyr67 and Asn69 each coordinate tRNA.

Belongs to the PTH family. In terms of assembly, monomer.

The protein localises to the cytoplasm. The catalysed reaction is an N-acyl-L-alpha-aminoacyl-tRNA + H2O = an N-acyl-L-amino acid + a tRNA + H(+). Its function is as follows. Hydrolyzes ribosome-free peptidyl-tRNAs (with 1 or more amino acids incorporated), which drop off the ribosome during protein synthesis, or as a result of ribosome stalling. In terms of biological role, catalyzes the release of premature peptidyl moieties from peptidyl-tRNA molecules trapped in stalled 50S ribosomal subunits, and thus maintains levels of free tRNAs and 50S ribosomes. The protein is Peptidyl-tRNA hydrolase of Moorella thermoacetica (strain ATCC 39073 / JCM 9320).